A 265-amino-acid chain; its full sequence is Hydroxyethylthiazole kinase 2 (265 aa).

Met39 serves as a coordination point for substrate. ATP contacts are provided by Lys115 and Thr168. Gly195 contacts substrate.

This sequence belongs to the Thz kinase family. It depends on Mg(2+) as a cofactor.

The catalysed reaction is 5-(2-hydroxyethyl)-4-methylthiazole + ATP = 4-methyl-5-(2-phosphooxyethyl)-thiazole + ADP + H(+). The protein operates within cofactor biosynthesis; thiamine diphosphate biosynthesis; 4-methyl-5-(2-phosphoethyl)-thiazole from 5-(2-hydroxyethyl)-4-methylthiazole: step 1/1. Functionally, catalyzes the phosphorylation of the hydroxyl group of 4-methyl-5-beta-hydroxyethylthiazole (THZ). The chain is Hydroxyethylthiazole kinase 2 from Clostridium botulinum (strain Langeland / NCTC 10281 / Type F).